We begin with the raw amino-acid sequence, 494 residues long: Cytochrome P450 2A11 (494 aa).

N6-acetyllysine is present on Lys379. Heme is bound at residue Cys439.

Belongs to the cytochrome P450 family. The cofactor is heme. As to expression, expressed in liver and lung as well as in nasal tissues.

It is found in the endoplasmic reticulum membrane. The protein resides in the microsome membrane. It catalyses the reaction an organic molecule + reduced [NADPH--hemoprotein reductase] + O2 = an alcohol + oxidized [NADPH--hemoprotein reductase] + H2O + H(+). In terms of biological role, catalyzes the oxygenation of a variety of substrates, including ethanol and procarcinogens such as N-nitrosodiethylamine and phenacetin. Has no or little activity as a coumarin 7-hydroxylase and in the formation of androstenedione from testosterone. This is Cytochrome P450 2A11 (CYP2A11) from Oryctolagus cuniculus (Rabbit).